The primary structure comprises 306 residues: D-alanine--D-alanine ligase B (306 aa).

Residues Glu15 and Ser150 contribute to the active site. The region spanning 101-303 is the ATP-grasp domain; that stretch reads KLLWQGAGLP…FSQLVVRILE (203 aa). 134 to 189 is a binding site for ATP; sequence ISALGLPVIVKPSREGSSVGMSKVVAENALQDALRLAFQHDEEVLIEKWLSGPEFT. 3 residues coordinate Mg(2+): Asp257, Glu270, and Asn272. Residue Ser281 is part of the active site.

This sequence belongs to the D-alanine--D-alanine ligase family. In terms of assembly, monomer. Requires Mg(2+) as cofactor. The cofactor is Mn(2+).

It is found in the cytoplasm. It carries out the reaction 2 D-alanine + ATP = D-alanyl-D-alanine + ADP + phosphate + H(+). It functions in the pathway cell wall biogenesis; peptidoglycan biosynthesis. Cell wall formation. In Escherichia coli (strain K12), this protein is D-alanine--D-alanine ligase B (ddlB).